A 334-amino-acid chain; its full sequence is UDP-N-acetylenolpyruvoylglucosamine reductase (334 aa).

The region spanning 16–186 (INVFAKKIII…LSVGIKLPKT (171 aa)) is the FAD-binding PCMH-type domain. Arg162 is an active-site residue. Ser232 functions as the Proton donor in the catalytic mechanism. Residue Glu329 is part of the active site.

It belongs to the MurB family. It depends on FAD as a cofactor.

The protein resides in the cytoplasm. The enzyme catalyses UDP-N-acetyl-alpha-D-muramate + NADP(+) = UDP-N-acetyl-3-O-(1-carboxyvinyl)-alpha-D-glucosamine + NADPH + H(+). It functions in the pathway cell wall biogenesis; peptidoglycan biosynthesis. In terms of biological role, cell wall formation. The chain is UDP-N-acetylenolpyruvoylglucosamine reductase from Buchnera aphidicola subsp. Baizongia pistaciae (strain Bp).